A 164-amino-acid chain; its full sequence is Transcription antitermination protein NusB (164 aa).

This sequence belongs to the NusB family.

In terms of biological role, involved in transcription antitermination. Required for transcription of ribosomal RNA (rRNA) genes. Binds specifically to the boxA antiterminator sequence of the ribosomal RNA (rrn) operons. This is Transcription antitermination protein NusB from Chlorobium limicola (strain DSM 245 / NBRC 103803 / 6330).